Reading from the N-terminus, the 253-residue chain is Ubiquinone biosynthesis O-methyltransferase (253 aa).

The S-adenosyl-L-methionine site is built by Arg-47, Gly-78, Asp-99, and Met-141.

This sequence belongs to the methyltransferase superfamily. UbiG/COQ3 family.

It catalyses the reaction a 3-demethylubiquinol + S-adenosyl-L-methionine = a ubiquinol + S-adenosyl-L-homocysteine + H(+). The enzyme catalyses a 3-(all-trans-polyprenyl)benzene-1,2-diol + S-adenosyl-L-methionine = a 2-methoxy-6-(all-trans-polyprenyl)phenol + S-adenosyl-L-homocysteine + H(+). It functions in the pathway cofactor biosynthesis; ubiquinone biosynthesis. Functionally, O-methyltransferase that catalyzes the 2 O-methylation steps in the ubiquinone biosynthetic pathway. The protein is Ubiquinone biosynthesis O-methyltransferase of Rhodopseudomonas palustris (strain ATCC BAA-98 / CGA009).